A 315-amino-acid polypeptide reads, in one-letter code: MQRRTRGINTGLLLLLSQVFQIGINNIPPVTLATLAVNVWFFLNPWKPLYHSCISVEKCYQQKDWQRLLLSPLHHGDDWHLYFNMVSMLWKGVKLERRLGSRWFAYVIATFSLLTGVVYLLLQFTVAELLNQPDFKRNCAVGFSGVLFALKVLSNHYCPGGFVNILGFPVPNRFACWAELVAIHFCTPGTSFAGHLAGILVGLMYTQGPLKKIMDTCAGIFISHAGPSGQQNHFNNAGPSGYQNHYADGRPVTYDATYRNYDVYTAGLSEEEQLERALRASIWDRGNTRNGPMPYGFRLPPEEMRRQRLHRFDGQ.

At 1 to 21 (MQRRTRGINTGLLLLLSQVFQ) the chain is on the cytoplasmic side. Residues 22-42 (IGINNIPPVTLATLAVNVWFF) traverse the membrane as a helical segment. Residues 43–103 (LNPWKPLYHS…KLERRLGSRW (61 aa)) are Lumenal-facing. The helical transmembrane segment at 104–124 (FAYVIATFSLLTGVVYLLLQF) threads the bilayer. Topologically, residues 125–137 (TVAELLNQPDFKR) are cytoplasmic. The helical transmembrane segment at 138–154 (NCAVGFSGVLFALKVLS) threads the bilayer. Residue Ser144 is the Nucleophile of the active site. Residues 155-180 (NHYCPGGFVNILGFPVPNRFACWAEL) lie on the Lumenal side of the membrane. A helical membrane pass occupies residues 181–201 (VAIHFCTPGTSFAGHLAGILV). His195 is an active-site residue. Topologically, residues 202 to 315 (GLMYTQGPLK…RQRLHRFDGQ (114 aa)) are cytoplasmic. Residues 269-284 (SEEEQLERALRASIWD) form a ubiquitin-binding domain (UBD) region. The interval 301–315 (PEEMRRQRLHRFDGQ) is VCP/p97-interacting motif (VIM).

This sequence belongs to the peptidase S54 family. Interacts with BIK and STEAP3. Interacts (via C-terminal domain) with VCP/P97. Interacts with ubiquitin and ubiquitinated proteins. As to expression, expressed in testis (at protein level). Expressed in intestine, lung, brain, kidney, epididymis, stomach, muscle, spleen, liver, heart and testis.

It localises to the endoplasmic reticulum membrane. The protein localises to the mitochondrion membrane. It catalyses the reaction Cleaves type-1 transmembrane domains using a catalytic dyad composed of serine and histidine that are contributed by different transmembrane domains.. With respect to regulation, inhibited by aprotinin. Functionally, intramembrane-cleaving serine protease that cleaves single transmembrane or multi-pass membrane proteins in the hydrophobic plane of the membrane, luminal loops and juxtamembrane regions. Involved in regulated intramembrane proteolysis and the subsequent release of functional polypeptides from their membrane anchors. Functional component of endoplasmic reticulum-associated degradation (ERAD) for misfolded membrane proteins. Required for the degradation process of some specific misfolded endoplasmic reticulum (ER) luminal proteins. Participates in the transfer of misfolded proteins from the ER to the cytosol, where they are destroyed by the proteasome in a ubiquitin-dependent manner. Functions in BIK, MPZ, PKD1, PTCRA, RHO, STEAP3 and TRAC processing. Involved in the regulation of exosomal secretion; inhibits the TSAP6-mediated secretion pathway. Involved in the regulation of apoptosis; modulates BIK-mediated apoptotic activity. Also plays a role in the regulation of spermatogenesis; inhibits apoptotic activity in spermatogonia. This is Rhomboid-related protein 4 (Rhbdd1) from Mus musculus (Mouse).